A 432-amino-acid polypeptide reads, in one-letter code: Glyceraldehyde-3-phosphate dehydrogenase, testis-specific (432 aa).

A testis-specific N-terminal extension region spans residues 1–97 (MSRRDVVLTN…PPPPPPPKPA (97 aa)). Positions 40–101 (PPPPKVEEPP…PPPKPAKELT (62 aa)) are disordered. Over residues 44-55 (KVEEPPPPKEEP) the composition is skewed to basic and acidic residues. Pro residues-rich tracts occupy residues 56–67 (PPPPPPPPPPQI) and 75–95 (APPP…PPPK). NAD(+) is bound by residues 109–110 (RI), D130, K175, Y197, and T217. D-glyceraldehyde 3-phosphate is bound by residues 247–249 (SCT), T278, 307–308 (TG), and R330. C248 serves as the catalytic Nucleophile. S350 is modified (phosphoserine). N412 is an NAD(+) binding site.

This sequence belongs to the glyceraldehyde-3-phosphate dehydrogenase family. As to quaternary structure, homotetramer. In terms of tissue distribution, expressed in both head and flagellum of epididymal sperm.

The protein resides in the cytoplasm. The catalysed reaction is D-glyceraldehyde 3-phosphate + phosphate + NAD(+) = (2R)-3-phospho-glyceroyl phosphate + NADH + H(+). It participates in carbohydrate degradation; glycolysis; pyruvate from D-glyceraldehyde 3-phosphate: step 1/5. In terms of biological role, may play an important role in regulating the switch between different pathways for energy production during spermiogenesis and in the spermatozoon. Required for sperm motility and male fertility. This chain is Glyceraldehyde-3-phosphate dehydrogenase, testis-specific (Gapdhs), found in Rattus norvegicus (Rat).